Reading from the N-terminus, the 346-residue chain is Biotin synthase (346 aa).

The Radical SAM core domain occupies 38-256; it reads RQVQVSTLLS…IAVARIMMPT (219 aa). 3 residues coordinate [4Fe-4S] cluster: cysteine 53, cysteine 57, and cysteine 60. Cysteine 97, cysteine 128, cysteine 188, and arginine 260 together coordinate [2Fe-2S] cluster.

The protein belongs to the radical SAM superfamily. Biotin synthase family. As to quaternary structure, homodimer. The cofactor is [4Fe-4S] cluster. Requires [2Fe-2S] cluster as cofactor.

It catalyses the reaction (4R,5S)-dethiobiotin + (sulfur carrier)-SH + 2 reduced [2Fe-2S]-[ferredoxin] + 2 S-adenosyl-L-methionine = (sulfur carrier)-H + biotin + 2 5'-deoxyadenosine + 2 L-methionine + 2 oxidized [2Fe-2S]-[ferredoxin]. It functions in the pathway cofactor biosynthesis; biotin biosynthesis; biotin from 7,8-diaminononanoate: step 2/2. Catalyzes the conversion of dethiobiotin (DTB) to biotin by the insertion of a sulfur atom into dethiobiotin via a radical-based mechanism. The polypeptide is Biotin synthase (Escherichia coli O157:H7).